The following is a 318-amino-acid chain: Probable tyrosine phosphatase protein N1 (318 aa).

A Tyrosine-protein phosphatase domain is found at 26–292; that stretch reads IVRLEHHQVI…LILQPGYYVL (267 aa). Cys233 serves as the catalytic Phosphocysteine intermediate.

It belongs to the protein-tyrosine phosphatase family.

It catalyses the reaction O-phospho-L-tyrosyl-[protein] + H2O = L-tyrosyl-[protein] + phosphate. The sequence is that of Probable tyrosine phosphatase protein N1 (N3) from Microplitis demolitor bracovirus (isolate Webb) (MdBV).